The sequence spans 221 residues: N-(5'-phosphoribosyl)anthranilate isomerase (221 aa).

This sequence belongs to the TrpF family.

The enzyme catalyses N-(5-phospho-beta-D-ribosyl)anthranilate = 1-(2-carboxyphenylamino)-1-deoxy-D-ribulose 5-phosphate. Its pathway is amino-acid biosynthesis; L-tryptophan biosynthesis; L-tryptophan from chorismate: step 3/5. The chain is N-(5'-phosphoribosyl)anthranilate isomerase from Chlorobaculum parvum (strain DSM 263 / NCIMB 8327) (Chlorobium vibrioforme subsp. thiosulfatophilum).